A 115-amino-acid chain; its full sequence is uncharacterized protein (115 aa).

This is an uncharacterized protein from Acidianus convivator (ATV).